Consider the following 220-residue polypeptide: Riboflavin kinase (220 aa).

Positions 1 to 92 (METDDQYYRA…LSRILAIKNN (92 aa)) are H-T-H motif-like. The tract at residues 93–220 (VVITGTVTSG…GDRVSVEVYT (128 aa)) is riboflavin kinase. 102–107 (GMGEGR) contributes to the CDP binding site. Thr131 and Asn133 together coordinate Mg(2+). Residues Thr188 and Glu195 each contribute to the FMN site. 200-203 (KYLR) lines the CDP pocket.

This sequence belongs to the archaeal riboflavin kinase family. It depends on Mg(2+) as a cofactor.

It carries out the reaction riboflavin + CTP = CDP + FMN + H(+). Its pathway is cofactor biosynthesis; FMN biosynthesis; FMN from riboflavin (CTP route): step 1/1. In terms of biological role, catalyzes the CTP-dependent phosphorylation of riboflavin (vitamin B2) to form flavin mononucleotide (FMN). This chain is Riboflavin kinase (ribK), found in Thermoplasma acidophilum (strain ATCC 25905 / DSM 1728 / JCM 9062 / NBRC 15155 / AMRC-C165).